A 343-amino-acid polypeptide reads, in one-letter code: MTLCIKNGFLAAALVLVGLLICSIQMIGAQSIGVCYGKHANNLPSDQDVINLYNANGIRKMRIYNPDTNVFNALRGSNIEIILDVPLQDLQSLTDPSRANGWVQDNIINHFPDVKFKYIAVGNEVSPGNNGQYAPFVAPAMQNVYNALAAAGLQDQIKVSTATYSGILANTYPPKDSIFRGEFNSFINPIIQFLVQHNLPLLANVYPYFGHIFNTADVPLSYALFTQQEANPAGYQNLFDALLDSMYFAVEKAGGQNVEIIVSESGWPSEGNSAATIENAQTYYENLINHVKSGAGTPKKPGKAIETYLFAMFDENNKEGDITEKHFGLFSPDQRAKYQLNFN.

Positions 1 to 29 (MTLCIKNGFLAAALVLVGLLICSIQMIGA) are cleaved as a signal peptide. The residue at position 30 (Q30) is a Pyrrolidone carboxylic acid. E124 (proton donor) is an active-site residue. The active-site Nucleophile is E264.

It belongs to the glycosyl hydrolase 17 family.

Its subcellular location is the secreted. It localises to the extracellular space. The catalysed reaction is Hydrolysis of (1-&gt;3)-beta-D-glucosidic linkages in (1-&gt;3)-beta-D-glucans.. In terms of biological role, implicated in the defense of plants against pathogens. This chain is Glucan endo-1,3-beta-glucosidase, acidic isoform GI9 (PR2), found in Nicotiana tabacum (Common tobacco).